Here is a 537-residue protein sequence, read N- to C-terminus: Tegument protein BRRF2 (537 aa).

Disordered regions lie at residues 321-366, 378-398, 414-466, and 486-537; these read RPRF…AVPP, AKQN…ETSP, SKQH…DEEF, and GLRV…LSVV. The span at 334 to 347 shows a compositional bias: polar residues; it reads EPQQTCSQLTSRGN. Over residues 423–441 the composition is skewed to low complexity; sequence SSQAAPSFSSVAPVASLSG. Residues 492-517 are compositionally biased toward acidic residues; that stretch reads DEDEDGSEDGEFSDLDLSDSDHEGDE.

Belongs to the lymphocryptovirus BRRF2 family.

It is found in the virion tegument. The sequence is that of Tegument protein BRRF2 from Homo sapiens (Human).